A 275-amino-acid polypeptide reads, in one-letter code: Succinate dehydrogenase [ubiquinone] iron-sulfur subunit, mitochondrial (275 aa).

Residues 1 to 24 constitute a mitochondrion transit peptide; the sequence is MFSRRIQVLSPFLKHFVNRNARMM. Positions 57-137 constitute a 2Fe-2S ferredoxin-type domain; it reads PEVKPKLQKY…PTKIYPLPHC (81 aa). 4 residues coordinate [2Fe-2S] cluster: Cys98, Cys103, Cys106, and Cys118. One can recognise a 4Fe-4S ferredoxin-type domain in the interval 178 to 208; the sequence is DRAKLDGLYECILCACCSTSCPSYWWNSEEY. The [4Fe-4S] cluster site is built by Cys188, Cys191, and Cys194. Residue Cys198 coordinates [3Fe-4S] cluster. Trp203 provides a ligand contact to a ubiquinone. 2 residues coordinate [3Fe-4S] cluster: Cys245 and Cys251. Position 255 (Cys255) interacts with [4Fe-4S] cluster.

It belongs to the succinate dehydrogenase/fumarate reductase iron-sulfur protein family. In terms of assembly, component of complex II composed of four subunits: a flavoprotein (FP), an iron-sulfur protein (IP), and a cytochrome b composed of a large and a small subunit. [2Fe-2S] cluster serves as cofactor. [3Fe-4S] cluster is required as a cofactor. It depends on [4Fe-4S] cluster as a cofactor.

The protein resides in the mitochondrion inner membrane. The catalysed reaction is a quinone + succinate = fumarate + a quinol. It functions in the pathway carbohydrate metabolism; tricarboxylic acid cycle; fumarate from succinate (eukaryal route): step 1/1. Functionally, iron-sulfur protein (IP) subunit of succinate dehydrogenase (SDH) that is involved in complex II of the mitochondrial electron transport chain and is responsible for transferring electrons from succinate to ubiquinone (coenzyme Q). This is Succinate dehydrogenase [ubiquinone] iron-sulfur subunit, mitochondrial (sdh2) from Schizosaccharomyces pombe (strain 972 / ATCC 24843) (Fission yeast).